The primary structure comprises 924 residues: Translation initiation factor IF-2 (924 aa).

The tract at residues 118–325 is disordered; the sequence is PSTAHREELA…QAPVVGGVRL (208 aa). Pro residues-rich tracts occupy residues 150–173 and 192–201; these read APHPGHPGMPTGPHPGPAPKPGGR and IPRPPAPRPS. A compositionally biased stretch (low complexity) spans 202–212; it reads ASPSSMSPRPG. Over residues 229–295 the composition is skewed to gly residues; the sequence is RPGGGRPGAP…GAAGAFGRPG (67 aa). A compositionally biased stretch (basic residues) spans 299–308; the sequence is RRGRKSKRQK. A tr-type G domain is found at 420–591; it reads VRPPVVTVMG…AVLLTADAAL (172 aa). Residues 429–436 form a G1 region; it reads GHVDHGKT. 429–436 contacts GTP; sequence GHVDHGKT. The segment at 454–458 is G2; sequence GITQH. The segment at 479 to 482 is G3; sequence DTPG. Residues 479-483 and 533-536 each bind GTP; these read DTPGH and NKID. The interval 533–536 is G4; sequence NKID. Residues 569 to 571 form a G5 region; the sequence is SAK.

This sequence belongs to the TRAFAC class translation factor GTPase superfamily. Classic translation factor GTPase family. IF-2 subfamily.

The protein resides in the cytoplasm. One of the essential components for the initiation of protein synthesis. Protects formylmethionyl-tRNA from spontaneous hydrolysis and promotes its binding to the 30S ribosomal subunits. Also involved in the hydrolysis of GTP during the formation of the 70S ribosomal complex. The protein is Translation initiation factor IF-2 of Mycobacterium leprae (strain Br4923).